We begin with the raw amino-acid sequence, 96 residues long: Class I hydrophobin 3 (96 aa).

The N-terminal stretch at Met-1–Ala-18 is a signal peptide. Disulfide bonds link Cys-43–Cys-72, Cys-51–Cys-66, Cys-52–Cys-57, and Cys-73–Cys-92.

It belongs to the fungal hydrophobin family.

Its subcellular location is the secreted. It localises to the cell wall. Its function is as follows. Aerial growth, conidiation, and dispersal of filamentous fungi in the environment rely upon a capability of their secreting small amphipathic proteins called hydrophobins (HPBs) with low sequence identity. Class I can self-assemble into an outermost layer of rodlet bundles on aerial cell surfaces, conferring cellular hydrophobicity that supports fungal growth, development and dispersal; whereas Class II form highly ordered films at water-air interfaces through intermolecular interactions but contribute nothing to the rodlet structure. Does not seem to be important for the ability to cause seedling disease. This Gibberella moniliformis (Maize ear and stalk rot fungus) protein is Class I hydrophobin 3.